The primary structure comprises 150 residues: Testis-expressed protein 22 (150 aa).

The segment covering 1–23 (MDSRKLSPRGKKLESHLSQEHRR) has biased composition (basic and acidic residues). A disordered region spans residues 1–26 (MDSRKLSPRGKKLESHLSQEHRRPPL).

It is found in the cytoplasm. It localises to the cytoplasmic vesicle. Its subcellular location is the secretory vesicle. The protein localises to the acrosome. This is Testis-expressed protein 22 (TEX22) from Homo sapiens (Human).